A 504-amino-acid polypeptide reads, in one-letter code: UDP-N-acetylmuramoylalanine--D-glutamate ligase (504 aa).

G129–T135 provides a ligand contact to ATP.

It belongs to the MurCDEF family.

Its subcellular location is the cytoplasm. The catalysed reaction is UDP-N-acetyl-alpha-D-muramoyl-L-alanine + D-glutamate + ATP = UDP-N-acetyl-alpha-D-muramoyl-L-alanyl-D-glutamate + ADP + phosphate + H(+). It participates in cell wall biogenesis; peptidoglycan biosynthesis. Functionally, cell wall formation. Catalyzes the addition of glutamate to the nucleotide precursor UDP-N-acetylmuramoyl-L-alanine (UMA). The sequence is that of UDP-N-acetylmuramoylalanine--D-glutamate ligase from Burkholderia mallei (strain NCTC 10247).